A 463-amino-acid chain; its full sequence is Homoserine O-acetyltransferase FUB5 (463 aa).

The region spanning 113-436 (NVMIICHALS…VSDDGHDAFL (324 aa)) is the AB hydrolase-1 domain. Residue Ser211 is the Nucleophile of the active site. Residues 296–312 (RFGRDTGSKKKTQKQES) are compositionally biased toward basic and acidic residues. Positions 296 to 331 (RFGRDTGSKKKTQKQESKTLPSNSTPIHSHSGADET) are disordered. Active-site residues include Asp403 and His432.

The protein belongs to the AB hydrolase superfamily. MetX family.

It carries out the reaction L-homoserine + acetyl-CoA = O-acetyl-L-homoserine + CoA. It participates in mycotoxin biosynthesis. Homoserine O-acetyltransferase; part of the gene cluster that mediates the biosynthesis of fusaric acid, a mycotoxin with low to moderate toxicity to animals and humans, but with high phytotoxic properties. L-aspartate is suggested as fusaric acid amino acid precursor that is activated and further processed to O-acetyl-L-homoserine by cluster enzymes aspartate kinase FUB3 and homoserine O-acetyltransferase FUB5, as well as enzymes of the primary metabolism. The polyketide synthase (PKS) FUB1 generates the triketide trans-2-hexenal which is presumptively released by the hydrolase FUB4 and linked to the NRPS-bound amino acid precursor by NAD(P)-dependent dehydrogenase FUB6. FUB1, FUB4, and the non-canonical NRPS Fub8 may form an enzyme complex. Further processing of the NRPS-bound intermediate might be carried out by FUB6 and the sulfhydrylase FUB7, enabling a spontaneous electrocyclization to close the carbon backbone of fusaric acid. Dihydrofusaric acid is likely to be released via reduction by the thioester reductase (TR) domain of FUB8 whereupon the final oxidation to fusaric acid may (also) be performed by the FMN-dependent dehydrogenase FUB9. In Gibberella moniliformis (strain M3125 / FGSC 7600) (Maize ear and stalk rot fungus), this protein is Homoserine O-acetyltransferase FUB5.